A 764-amino-acid chain; its full sequence is Thyrotropin receptor (764 aa).

The N-terminal stretch at 1–20 (MRPPPLLHLALLLALPRSLG) is a signal peptide. Topologically, residues 21 to 413 (GKGCPSPPCE…EFNPCEDIMG (393 aa)) are extracellular. Residues cysteine 31 and cysteine 41 are joined by a disulfide bond. Residues asparagine 77 and asparagine 99 are each glycosylated (N-linked (GlcNAc...) asparagine). LRR repeat units follow at residues 125-149 (LPLL…KVYS), 150-174 (TDVF…AFQG), 176-199 (CNET…AFNG), 201-223 (KLDA…AFGG), 225-248 (YSGP…GLEH), and 250-271 (KELI…SFLH). 2 N-linked (GlcNAc...) asparagine glycosylation sites follow: asparagine 177 and asparagine 198. Asparagine 302 is a glycosylation site (N-linked (GlcNAc...) asparagine). Residue tyrosine 385 is modified to Sulfotyrosine. The chain crosses the membrane as a helical span at residues 414–441 (YKFLRIVVWFVSLLALLGNVFVLIVLLT). Over 442–450 (SHYKLTVPR) the chain is Cytoplasmic. A helical transmembrane segment spans residues 451 to 473 (FLMCNLAFADFCMGMYLLLIASV). At 474–494 (DLYTHSEYYNHAIDWQTGPGC) the chain is on the extracellular side. Cysteines 494 and 569 form a disulfide. A helical transmembrane segment spans residues 495–517 (NTAGFFTVFASELSVYTLTVITL). Topologically, residues 518 to 537 (ERWYAITFAMRLDRKIRLRH) are cytoplasmic. A helical transmembrane segment spans residues 538–560 (AYAIMVGGWVCCFLLALLPLVGI). Residues 561–580 (SSYAKVSICLPMDTETPLAL) are Extracellular-facing. The helical transmembrane segment at 581-602 (AYIILVLLLNIVAFIIVCSCYV) threads the bilayer. Residues 603–625 (KIYITVRNPQYNPGDKDTKIAKR) are Cytoplasmic-facing. The helical transmembrane segment at 626–649 (MAVLIFTDFMCMAPISFYALSALM) threads the bilayer. At 650-660 (NKPLITVTNSK) the chain is on the extracellular side. A helical membrane pass occupies residues 661-682 (ILLVLFYPLNSCANPFLYAIFT). Over 683–764 (KAFQRDVFIL…ISKEYNQTVL (82 aa)) the chain is Cytoplasmic. The PDZ-binding motif lies at 762–764 (TVL).

This sequence belongs to the G-protein coupled receptor 1 family. FSH/LSH/TSH subfamily. As to quaternary structure, interacts with heterodimer GPHA2:GPHB5; this interaction stimulates cAMP production. Interacts (via the PDZ-binding motif) with SCRIB; regulates TSHR trafficking and function. In terms of processing, glycosylated. Sulfated. Sulfation on Tyr-385 plays a role in thyrotropin receptor binding and activation.

It is found in the cell membrane. Its subcellular location is the basolateral cell membrane. In terms of biological role, receptor for the thyroid-stimulating hormone (TSH) or thyrotropin. Also acts as a receptor for the heterodimeric glycoprotein hormone (GPHA2:GPHB5) or thyrostimulin. The activity of this receptor is mediated by G proteins which activate adenylate cyclase. Plays a central role in controlling thyroid cell metabolism. The chain is Thyrotropin receptor (TSHR) from Canis lupus familiaris (Dog).